Here is a 390-residue protein sequence, read N- to C-terminus: O-phospho-L-seryl-tRNA:Cys-tRNA synthase 2 (390 aa).

Pyridoxal 5'-phosphate contacts are provided by residues 83 to 84 (AR), asparagine 187, and 210 to 212 (SGH). Lysine 213 carries the post-translational modification N6-(pyridoxal phosphate)lysine.

The protein belongs to the SepCysS family. In terms of assembly, homodimer. Interacts with SepRS. The cofactor is pyridoxal 5'-phosphate.

The catalysed reaction is O-phospho-L-seryl-tRNA(Cys) + hydrogen sulfide + H(+) = L-cysteinyl-tRNA(Cys) + phosphate. Its function is as follows. Converts O-phospho-L-seryl-tRNA(Cys) (Sep-tRNA(Cys)) to L-cysteinyl-tRNA(Cys) (Cys-tRNA(Cys)). The chain is O-phospho-L-seryl-tRNA:Cys-tRNA synthase 2 from Archaeoglobus fulgidus (strain ATCC 49558 / DSM 4304 / JCM 9628 / NBRC 100126 / VC-16).